A 2360-amino-acid polypeptide reads, in one-letter code: Protein Ycf2 (2360 aa).

3 disordered regions span residues 172-193, 225-255, and 944-995; these read SSQL…GTED, TEIE…EMNN, and KRKK…KRKE. Residues 234–244 are compositionally biased toward low complexity; the sequence is KGLSGSSSKSR. The span at 245–254 shows a compositional bias: basic and acidic residues; that stretch reads LFTEGEKEMN. Over residues 944–959 the composition is skewed to basic residues; sequence KRKKKKPEKRKKKKPE. Residues 960–993 are compositionally biased toward basic and acidic residues; it reads KRKEKKPEKRKEKKPEKRKEKKPEKRKEKKPEKR. Residue 1425–1432 coordinates ATP; it reads GSIGSGRS. Disordered regions lie at residues 1499 to 1518, 1843 to 2031, and 2098 to 2214; these read YEDR…YEPG, LVGS…LLRP, and PAEE…DGFS. Residues 1849–2011 are compositionally biased toward acidic residues; it reads TEEEVEGTEE…VEGTEDEEVE (163 aa). Basic and acidic residues predominate over residues 2012–2024; it reads GTEKDSSQFDNDR. 2 stretches are compositionally biased toward acidic residues: residues 2098–2115 and 2122–2197; these read PAEE…EALE and GEEE…ENDS.

It belongs to the Ycf2 family.

Its subcellular location is the plastid. It localises to the chloroplast stroma. Probable ATPase of unknown function. Its presence in a non-photosynthetic plant (Epifagus virginiana) and experiments in tobacco indicate that it has an essential function which is probably not related to photosynthesis. This chain is Protein Ycf2, found in Oenothera argillicola (Appalachian evening primrose).